The chain runs to 315 residues: Olfactory receptor 10A4 (315 aa).

Topologically, residues M1–A26 are extracellular. N5 carries an N-linked (GlcNAc...) asparagine glycan. A helical transmembrane segment spans residues L27 to I47. At L48 to A55 the chain is on the cytoplasmic side. The helical transmembrane segment at L56–L76 threads the bilayer. The Extracellular portion of the chain corresponds to V77–T100. A disulfide bridge connects residues C98 and C190. A helical transmembrane segment spans residues Q101–Y121. Residues D122 to I140 are Cytoplasmic-facing. The chain crosses the membrane as a helical span at residues S141–T161. Topologically, residues T162–L198 are extracellular. A helical transmembrane segment spans residues E199–S218. The Cytoplasmic portion of the chain corresponds to Y219–A238. The chain crosses the membrane as a helical span at residues F239–T259. The Extracellular portion of the chain corresponds to Y260–K272. A helical membrane pass occupies residues K273–S293. Residues R294 to L315 lie on the Cytoplasmic side of the membrane.

The protein belongs to the G-protein coupled receptor 1 family. Expressed in the tongue.

It is found in the cell membrane. Functionally, odorant receptor (Potential). May be involved in taste perception. The polypeptide is Olfactory receptor 10A4 (OR10A4) (Homo sapiens (Human)).